The sequence spans 376 residues: Glutamate 5-kinase (376 aa).

Lysine 18 provides a ligand contact to ATP. 3 residues coordinate substrate: serine 58, aspartate 145, and asparagine 157. Residues 177–178 (SD) and 218–224 (TGGMASK) contribute to the ATP site. The PUA domain occupies 280–358 (TGALTLDAGA…SELPGELRRP (79 aa)).

This sequence belongs to the glutamate 5-kinase family.

It is found in the cytoplasm. The enzyme catalyses L-glutamate + ATP = L-glutamyl 5-phosphate + ADP. Its pathway is amino-acid biosynthesis; L-proline biosynthesis; L-glutamate 5-semialdehyde from L-glutamate: step 1/2. Functionally, catalyzes the transfer of a phosphate group to glutamate to form L-glutamate 5-phosphate. The polypeptide is Glutamate 5-kinase (Mycobacterium tuberculosis (strain ATCC 25177 / H37Ra)).